A 198-amino-acid polypeptide reads, in one-letter code: Glycerol-3-phosphate acyltransferase (198 aa).

5 helical membrane passes run M1–F21, H77–L97, M111–L131, I136–I156, and G157–K177.

It belongs to the PlsY family. As to quaternary structure, probably interacts with PlsX.

It is found in the cell inner membrane. It catalyses the reaction an acyl phosphate + sn-glycerol 3-phosphate = a 1-acyl-sn-glycero-3-phosphate + phosphate. Its pathway is lipid metabolism; phospholipid metabolism. Functionally, catalyzes the transfer of an acyl group from acyl-phosphate (acyl-PO(4)) to glycerol-3-phosphate (G3P) to form lysophosphatidic acid (LPA). This enzyme utilizes acyl-phosphate as fatty acyl donor, but not acyl-CoA or acyl-ACP. The chain is Glycerol-3-phosphate acyltransferase from Prochlorococcus marinus (strain MIT 9515).